A 177-amino-acid chain; its full sequence is ATP synthase subunit b (177 aa).

A helical transmembrane segment spans residues 35–55 (FFVVLAIFLIVLAVIGTFVVP).

The protein belongs to the ATPase B chain family. As to quaternary structure, F-type ATPases have 2 components, F(1) - the catalytic core - and F(0) - the membrane proton channel. F(1) has five subunits: alpha(3), beta(3), gamma(1), delta(1), epsilon(1). F(0) has three main subunits: a(1), b(2) and c(10-14). The alpha and beta chains form an alternating ring which encloses part of the gamma chain. F(1) is attached to F(0) by a central stalk formed by the gamma and epsilon chains, while a peripheral stalk is formed by the delta and b chains.

The protein localises to the cell membrane. In terms of biological role, f(1)F(0) ATP synthase produces ATP from ADP in the presence of a proton or sodium gradient. F-type ATPases consist of two structural domains, F(1) containing the extramembraneous catalytic core and F(0) containing the membrane proton channel, linked together by a central stalk and a peripheral stalk. During catalysis, ATP synthesis in the catalytic domain of F(1) is coupled via a rotary mechanism of the central stalk subunits to proton translocation. Its function is as follows. Component of the F(0) channel, it forms part of the peripheral stalk, linking F(1) to F(0). This chain is ATP synthase subunit b, found in Mycobacteroides abscessus (strain ATCC 19977 / DSM 44196 / CCUG 20993 / CIP 104536 / JCM 13569 / NCTC 13031 / TMC 1543 / L948) (Mycobacterium abscessus).